The following is a 48-amino-acid chain: Large ribosomal subunit protein eL40 (48 aa).

It belongs to the eukaryotic ribosomal protein eL40 family.

The polypeptide is Large ribosomal subunit protein eL40 (Methanoculleus marisnigri (strain ATCC 35101 / DSM 1498 / JR1)).